The sequence spans 467 residues: Asparagine--tRNA ligase (467 aa).

The protein belongs to the class-II aminoacyl-tRNA synthetase family. Homodimer.

Its subcellular location is the cytoplasm. The enzyme catalyses tRNA(Asn) + L-asparagine + ATP = L-asparaginyl-tRNA(Asn) + AMP + diphosphate + H(+). This is Asparagine--tRNA ligase from Mannheimia succiniciproducens (strain KCTC 0769BP / MBEL55E).